A 205-amino-acid chain; its full sequence is MVSSCCGSVCSDQGCGLETCCRPSCCQTTCCRTTCCRPSCCVSSCCRPQCCQSVCCQPTCCRPSCCPSCCQTTCCRTTCCRPSCCVSSCCRPQCCQSVCCQPTCCRPSCSISSCCRPSCCVSRCCRSQCCQSVCCQPTCCRPSCCISSCCRPSCCESSCCRPCCCRPCCCLRPVCGRVSCHTTCYRPTCVISTCPRPLCCASSCC.

30 repeat units span residues 20–24 (CCRPS), 25–29 (CCQTT), 30–34 (CCRTT), 35–39 (CCRPS), 40–44 (CCVSS), 45–49 (CCRPQ), 50–54 (CCQSV), 55–59 (CCQPT), 60–64 (CCRPS), 65–68 (CCPS), 69–73 (CCQTT), 74–78 (CCRTT), 79–83 (CCRPS), 84–88 (CCVSS), 89–93 (CCRPQ), 94–98 (CCQSV), 99–103 (CCQPT), 104–108 (CCRPS), 114–118 (CCRPS), 119–123 (CCVSR), 124–128 (CCRSQ), 129–133 (CCQSV), 134–138 (CCQPT), 139–143 (CCRPS), 144–148 (CCISS), 149–153 (CCRPS), 154–158 (CCESS), 159–163 (CCRPC), 164–168 (CCRPC), and 169–173 (CCLRP). The 30 X 5 AA repeats of C-C-[IRQVEL]-[SPTR]-[STVQRCP] stretch occupies residues 20–173 (CCRPSCCQTT…CCRPCCCLRP (154 aa)).

This sequence belongs to the KRTAP type 4 family. Interacts with hair keratins. Expressed in the hair follicles.

Its function is as follows. In the hair cortex, hair keratin intermediate filaments are embedded in an interfilamentous matrix, consisting of hair keratin-associated proteins (KRTAP), which are essential for the formation of a rigid and resistant hair shaft through their extensive disulfide bond cross-linking with abundant cysteine residues of hair keratins. The matrix proteins include the high-sulfur and high-glycine-tyrosine keratins. The polypeptide is Keratin-associated protein 4-6 (KRTAP4-6) (Homo sapiens (Human)).